The chain runs to 4134 residues: DNA-dependent protein kinase catalytic subunit (4134 aa).

HEAT repeat units follow at residues 900 to 937 (VIYL…VAYM), 1000 to 1036 (QDTV…LKWS), and 1050 to 1085 (ANTK…YREF). 2 TPR repeats span residues 1265-1305 (YNTF…HDIH) and 1722-1755 (PMSS…SQSP). Position 2055 is a phosphoserine; by autocatalysis (S2055). A TPR 3 repeat occupies 2207–2240 (DEILANRLLEFLMKNAFHQKRAVFRHNLEIIKTV). At T2609 the chain carries Phosphothreonine; by autocatalysis. A compositionally biased stretch (polar residues) spans 2611-2629 (ASQSTNRNSSQERSLSISG). Residues 2611 to 2631 (ASQSTNRNSSQERSLSISGSV) are disordered. S2612 carries the phosphoserine; by autocatalysis modification. T2638 and T2647 each carry phosphothreonine; by autocatalysis. Positions 2880–3545 (NVSTSCLASL…IYPFTISSES (666 aa)) constitute an FAT domain. The PI3K/PI4K catalytic domain maps to 3728 to 4059 (FDERIMVLES…VSYVKRKLTG (332 aa)). The tract at residues 3734–3740 (VLESLRK) is G-loop. Residues 3925–3933 (GIGDRHLSN) are catalytic loop. The segment at 3945–3970 (GIDFGHAFGSATQFLPVPELMPFRLT) is activation loop. Positions 4102-4134 (DRLSEETQVRCLIDQATDPNLLGRVWEGWEPWM) constitute an FATC domain.

Belongs to the PI3/PI4-kinase family. In terms of assembly, DNA-PK is a heterotrimer of PRKDC and the Ku dimer (composed of XRCC6/Ku70 and XRCC5/Ku86). Component of the core long-range non-homologous end joining (NHEJ) complex (also named DNA-PK complex) composed of PRKDC, LIG4, XRCC4, XRCC6/Ku70, XRCC5/Ku86 and NHEJ1/XLF. Additional component of the NHEJ complex includes PAXX. Following autophosphorylation, PRKDC dissociates from DNA. Autophosphorylated at two clusters, the T2609 cluster and the S2056 cluster. Autophosphorylated on Ser-2055, Thr-2609, Thr-2638 and Thr-2647. Ser-2055 and Thr-2609 are DNA damage-inducible phosphorylation sites (inducible with ionizing radiation, IR) dephosphorylated by PPP5C. Autophosphorylation induces a conformational change that leads to remodeling of the DNA-PK complex, requisite for efficient end processing and DNA repair. Autophosphorylation in trans within DNA-PK complexes loaded on DNA ends leads to the dissociation of PRKDC from DNA and the transition into the short-range NHEJ complex. Autophosphorylation of the T2609 cluster is required for hematopoietic development and protein synthesis in erythrocytes precursors.

Its subcellular location is the nucleus. The protein resides in the nucleolus. It carries out the reaction L-seryl-[protein] + ATP = O-phospho-L-seryl-[protein] + ADP + H(+). It catalyses the reaction L-threonyl-[protein] + ATP = O-phospho-L-threonyl-[protein] + ADP + H(+). Its function is as follows. Serine/threonine-protein kinase that acts as a molecular sensor for DNA damage. Involved in DNA nonhomologous end joining (NHEJ) required for double-strand break (DSB) repair and V(D)J recombination. Must be bound to DNA to express its catalytic properties. Promotes processing of hairpin DNA structures in V(D)J recombination by activation of the hairpin endonuclease artemis (DCLRE1C). Recruited by XRCC5 and XRCC6 to DNA ends and is required to (1) protect and align broken ends of DNA, thereby preventing their degradation, (2) and sequester the DSB for repair by NHEJ. Acts as a scaffold protein to aid the localization of DNA repair proteins to the site of damage. The assembly of the DNA-PK complex at DNA ends is also required for the NHEJ ligation step. Found at the ends of chromosomes, suggesting a further role in the maintenance of telomeric stability and the prevention of chromosomal end fusion. As part of the DNA-PK complex, involved in the early steps of ribosome assembly by promoting the processing of precursor rRNA into mature 18S rRNA in the small-subunit processome. Recognizes the substrate consensus sequence [ST]-Q. Phosphorylates 'Ser-139' of histone variant H2AX, thereby regulating DNA damage response mechanism. This is DNA-dependent protein kinase catalytic subunit (PRKDC) from Gallus gallus (Chicken).